Here is a 169-residue protein sequence, read N- to C-terminus: Peptide deformylase (169 aa).

Fe cation is bound by residues Cys-91 and His-133. Glu-134 is a catalytic residue. His-137 serves as a coordination point for Fe cation.

This sequence belongs to the polypeptide deformylase family. The cofactor is Fe(2+).

It carries out the reaction N-terminal N-formyl-L-methionyl-[peptide] + H2O = N-terminal L-methionyl-[peptide] + formate. Removes the formyl group from the N-terminal Met of newly synthesized proteins. Requires at least a dipeptide for an efficient rate of reaction. N-terminal L-methionine is a prerequisite for activity but the enzyme has broad specificity at other positions. The protein is Peptide deformylase of Serratia proteamaculans (strain 568).